A 291-amino-acid chain; its full sequence is Beta-lactamase CTX-M-6 (291 aa).

The first 28 residues, 1 to 28, serve as a signal peptide directing secretion; it reads MMTQSIRRSMLTVMATLPLLFSSATLHA. Ser-73 acts as the Acyl-ester intermediate in catalysis. 237 to 239 contacts substrate; it reads KTG.

Belongs to the class-A beta-lactamase family.

It carries out the reaction a beta-lactam + H2O = a substituted beta-amino acid. Has cefotaxime-hydrolyzing activity. The protein is Beta-lactamase CTX-M-6 (bla) of Salmonella typhimurium.